The primary structure comprises 371 residues: Putative agmatine deiminase (371 aa).

Cys-361 serves as the catalytic Amidino-cysteine intermediate.

The protein belongs to the agmatine deiminase family.

The catalysed reaction is agmatine + H2O = N-carbamoylputrescine + NH4(+). This Selenomonas ruminantium protein is Putative agmatine deiminase.